The primary structure comprises 148 residues: Transcriptional regulator MraZ (148 aa).

SpoVT-AbrB domains lie at 5–51 (VATV…PLPE) and 80–123 (AHDI…NEAR).

It belongs to the MraZ family. Forms oligomers.

Its subcellular location is the cytoplasm. It localises to the nucleoid. This is Transcriptional regulator MraZ from Thiobacillus denitrificans (strain ATCC 25259 / T1).